Here is a 146-residue protein sequence, read N- to C-terminus: VKWTDKERAVILGIFSGLDYEDIGPKALVRCLIVYPWTQRYFGAFGNLSSAAAISGNLKIAAHGVKVLHGLDMALQHMDNIMETYADLSILHSETLHVDPDNFKLLADCLTITIAAKMGHCFTPDTQIAFHKFLAVVVSALGKQYC.

The Globin domain occupies 2-146 (KWTDKERAVI…VVSALGKQYC (145 aa)). 2 residues coordinate heme b: H63 and H92.

Belongs to the globin family. As to quaternary structure, heterotetramer of two alpha chains and two beta chains. As to expression, red blood cells.

Functionally, involved in oxygen transport from gills to the various peripheral tissues. This is Hemoglobin subunit beta-2 (hbb2) from Lycodes reticulatus (Arctic eelpout).